Consider the following 142-residue polypeptide: MKTYLAPVNEIEKEWYVVDAENKVLGRLASEIASRLRGKHKPTFSSFIDNGDFIVVTNAEKIALTGKKWDDKTYYRHTGYIGGIKETSAKELLEKHPTDLITKAVRGMLPKNKMGRAQLKKLKVYVGAAHPHAAQQPTVLDI.

This sequence belongs to the universal ribosomal protein uL13 family. As to quaternary structure, part of the 50S ribosomal subunit.

In terms of biological role, this protein is one of the early assembly proteins of the 50S ribosomal subunit, although it is not seen to bind rRNA by itself. It is important during the early stages of 50S assembly. This chain is Large ribosomal subunit protein uL13, found in Desulfotalea psychrophila (strain LSv54 / DSM 12343).